The primary structure comprises 447 residues: uncharacterized protein (447 aa).

Disordered regions lie at residues 1–80 (MTFE…EQSS), 115–184 (ATTQ…PNNP), and 295–322 (LQDN…SSGI). The span at 11-32 (QRRDESAYRLGEEDGRQKGESS) shows a compositional bias: basic and acidic residues. A compositionally biased stretch (polar residues) spans 42–51 (KNPSNVSFWS). Residues 61 to 72 (VKTDRPQFHRAD) show a composition bias toward basic and acidic residues. A compositionally biased stretch (polar residues) spans 115–158 (ATTQSSPISTSFNPQLPSNSNTNRFDFGSESQLSSNYTNDTGLS). The segment covering 300–321 (SLTSQGSNLSSQNSGLSSSSSG) has biased composition (low complexity). A run of 2 helical transmembrane segments spans residues 385 to 405 (FMFL…ASFL) and 424 to 444 (IINR…IGLG).

It is found in the membrane. This is an uncharacterized protein from Schizosaccharomyces pombe (strain 972 / ATCC 24843) (Fission yeast).